Consider the following 457-residue polypeptide: UDP-N-acetylmuramate--L-alanine ligase (457 aa).

118-124 contributes to the ATP binding site; the sequence is GTHGKTT.

This sequence belongs to the MurCDEF family.

The protein localises to the cytoplasm. The catalysed reaction is UDP-N-acetyl-alpha-D-muramate + L-alanine + ATP = UDP-N-acetyl-alpha-D-muramoyl-L-alanine + ADP + phosphate + H(+). It functions in the pathway cell wall biogenesis; peptidoglycan biosynthesis. Functionally, cell wall formation. This is UDP-N-acetylmuramate--L-alanine ligase from Clostridium perfringens (strain 13 / Type A).